The chain runs to 71 residues: DNA-directed RNA polymerase subunit omega (71 aa).

Belongs to the RNA polymerase subunit omega family. As to quaternary structure, the RNAP catalytic core consists of 2 alpha, 1 beta, 1 beta' and 1 omega subunit. When a sigma factor is associated with the core the holoenzyme is formed, which can initiate transcription.

It carries out the reaction RNA(n) + a ribonucleoside 5'-triphosphate = RNA(n+1) + diphosphate. Functionally, promotes RNA polymerase assembly. Latches the N- and C-terminal regions of the beta' subunit thereby facilitating its interaction with the beta and alpha subunits. This chain is DNA-directed RNA polymerase subunit omega, found in Syntrophomonas wolfei subsp. wolfei (strain DSM 2245B / Goettingen).